Consider the following 439-residue polypeptide: Dolichyl-diphosphooligosaccharide--protein glycosyltransferase 48 kDa subunit (439 aa).

The N-terminal stretch at 1–26 is a signal peptide; that stretch reads MEPSTAARAWALFWLLPPLLGAVCAS. Over 27-410 the chain is Lumenal; sequence GPRTLVLLDN…YERFIPSAYP (384 aa). Residues 411-430 form a helical membrane-spanning segment; it reads YYASAFSMMLGLFIFSIVFL. Over 431–439 the chain is Cytoplasmic; that stretch reads HMKEKEKSD.

It belongs to the DDOST 48 kDa subunit family. Component of the oligosaccharyltransferase (OST) complex. OST exists in two different complex forms which contain common core subunits RPN1, RPN2, OST48, OST4, DAD1 and TMEM258, either STT3A or STT3B as catalytic subunits, and form-specific accessory subunits. STT3A complex assembly occurs through the formation of 3 subcomplexes. Subcomplex 1 contains RPN1 and TMEM258, subcomplex 2 contains the STT3A-specific subunits STT3A, DC2/OSTC, and KCP2 as well as the core subunit OST4, and subcomplex 3 contains RPN2, DAD1, and OST48. The STT3A complex can form stable complexes with the Sec61 complex or with both the Sec61 and TRAP complexes. Interacts with SMIM22.

It localises to the endoplasmic reticulum membrane. It functions in the pathway protein modification; protein glycosylation. Functionally, subunit of the oligosaccharyl transferase (OST) complex that catalyzes the initial transfer of a defined glycan (Glc(3)Man(9)GlcNAc(2) in eukaryotes) from the lipid carrier dolichol-pyrophosphate to an asparagine residue within an Asn-X-Ser/Thr consensus motif in nascent polypeptide chains, the first step in protein N-glycosylation. N-glycosylation occurs cotranslationally and the complex associates with the Sec61 complex at the channel-forming translocon complex that mediates protein translocation across the endoplasmic reticulum (ER). All subunits are required for a maximal enzyme activity. Required for the assembly of both SST3A- and SS3B-containing OST complexes. The polypeptide is Dolichyl-diphosphooligosaccharide--protein glycosyltransferase 48 kDa subunit (Pongo abelii (Sumatran orangutan)).